The chain runs to 273 residues: 4-hydroxy-tetrahydrodipicolinate reductase (273 aa).

Residues 12-17 (GAGGRM) and glutamate 38 contribute to the NAD(+) site. Arginine 39 serves as a coordination point for NADP(+). NAD(+) contacts are provided by residues 102–104 (GTT) and 126–129 (AANF). Residue histidine 159 is the Proton donor/acceptor of the active site. Histidine 160 provides a ligand contact to (S)-2,3,4,5-tetrahydrodipicolinate. Lysine 163 (proton donor) is an active-site residue. Residue 169–170 (GT) participates in (S)-2,3,4,5-tetrahydrodipicolinate binding.

Belongs to the DapB family. As to quaternary structure, homotetramer.

It is found in the cytoplasm. It catalyses the reaction (S)-2,3,4,5-tetrahydrodipicolinate + NAD(+) + H2O = (2S,4S)-4-hydroxy-2,3,4,5-tetrahydrodipicolinate + NADH + H(+). It carries out the reaction (S)-2,3,4,5-tetrahydrodipicolinate + NADP(+) + H2O = (2S,4S)-4-hydroxy-2,3,4,5-tetrahydrodipicolinate + NADPH + H(+). The protein operates within amino-acid biosynthesis; L-lysine biosynthesis via DAP pathway; (S)-tetrahydrodipicolinate from L-aspartate: step 4/4. In terms of biological role, catalyzes the conversion of 4-hydroxy-tetrahydrodipicolinate (HTPA) to tetrahydrodipicolinate. This chain is 4-hydroxy-tetrahydrodipicolinate reductase, found in Pectobacterium carotovorum subsp. carotovorum (strain PC1).